The primary structure comprises 206 residues: Small ribosomal subunit protein uS4 (206 aa).

The S4 RNA-binding domain occupies 96 to 156 (TRLDNVVYRM…EKSKKQARII (61 aa)).

The protein belongs to the universal ribosomal protein uS4 family. As to quaternary structure, part of the 30S ribosomal subunit. Contacts protein S5. The interaction surface between S4 and S5 is involved in control of translational fidelity.

Functionally, one of the primary rRNA binding proteins, it binds directly to 16S rRNA where it nucleates assembly of the body of the 30S subunit. Its function is as follows. With S5 and S12 plays an important role in translational accuracy. This is Small ribosomal subunit protein uS4 from Shewanella woodyi (strain ATCC 51908 / MS32).